Reading from the N-terminus, the 194-residue chain is MRESSQIRETTETKIKLSLQLDDGKNVSVRTGVGFFDHMLTLFARHGRFGLQVEAEGDVFVDAHHTVEDVGIVLGNCLKEALHSKEGINRYGSAYVPMDESLGFVAIDISGRSYIVFQGELTNPKLGDFDTELTEEFFRAVAHAANITLHARILYGSNTHHKIEALFKAFGRALREAVERNANITGVNSTKGML.

It belongs to the imidazoleglycerol-phosphate dehydratase family.

Its subcellular location is the cytoplasm. It catalyses the reaction D-erythro-1-(imidazol-4-yl)glycerol 3-phosphate = 3-(imidazol-4-yl)-2-oxopropyl phosphate + H2O. It functions in the pathway amino-acid biosynthesis; L-histidine biosynthesis; L-histidine from 5-phospho-alpha-D-ribose 1-diphosphate: step 6/9. This is Imidazoleglycerol-phosphate dehydratase from Bacillus cereus (strain AH187).